The chain runs to 94 residues: Long neurotoxin LNTX8 (94 aa).

Positions M1 to T21 are cleaved as a signal peptide. Intrachain disulfides connect C24–C43, C36–C64, C49–C53, C68–C79, and C80–C85.

This sequence belongs to the three-finger toxin family. Long-chain subfamily. Type II alpha-neurotoxin sub-subfamily. Expressed by the venom gland.

Its subcellular location is the secreted. Functionally, binds with high affinity to muscular (alpha-1/CHRNA1) and neuronal (alpha-7/CHRNA7) nicotinic acetylcholine receptor (nAChR) and inhibits acetylcholine from binding to the receptor, thereby impairing neuromuscular and neuronal transmission. This Ophiophagus hannah (King cobra) protein is Long neurotoxin LNTX8.